Here is a 149-residue protein sequence, read N- to C-terminus: 3-hydroxyacyl-[acyl-carrier-protein] dehydratase FabZ (149 aa).

Residue His52 is part of the active site.

This sequence belongs to the thioester dehydratase family. FabZ subfamily.

Its subcellular location is the cytoplasm. The catalysed reaction is a (3R)-hydroxyacyl-[ACP] = a (2E)-enoyl-[ACP] + H2O. Functionally, involved in unsaturated fatty acids biosynthesis. Catalyzes the dehydration of short chain beta-hydroxyacyl-ACPs and long chain saturated and unsaturated beta-hydroxyacyl-ACPs. This chain is 3-hydroxyacyl-[acyl-carrier-protein] dehydratase FabZ, found in Cupriavidus necator (strain ATCC 17699 / DSM 428 / KCTC 22496 / NCIMB 10442 / H16 / Stanier 337) (Ralstonia eutropha).